The sequence spans 676 residues: Envelope glycoprotein (676 aa).

The first 32 residues, M1–S32, serve as a signal peptide directing secretion. The Extracellular segment spans residues M33–Q650. N40 carries N-linked (GlcNAc...) asparagine; by host glycosylation. 5 disulfides stabilise this stretch: C53/C609, C108/C135, C121/C147, C511/C556, and C601/C608. A receptor-binding region spans residues K54–E201. N-linked (GlcNAc...) asparagine; by host glycans are attached at residues N204, N208, N238, N257, N268, N296, and N314. Residues E305–T485 are mucin-like region. The interval S312–V351 is disordered. Residues R330 to P344 are compositionally biased toward basic and acidic residues. N366 is a glycosylation site (N-linked (GlcNAc...) asparagine; by host). Residues S406–L458 form a disordered region. Polar residues-rich tracts occupy residues P415–T430 and S448–L458. An N-linked (GlcNAc...) asparagine; by host glycan is attached at N463. Residues H524–A539 are fusion peptide. A coiled-coil region spans residues L554–R595. Residue N563 is glycosylated (N-linked (GlcNAc...) asparagine; by host). Residues W615–P634 adopt a coiled-coil conformation. N618 carries an N-linked (GlcNAc...) asparagine; by host glycan. Residues W651–V671 form a helical membrane-spanning segment. Residues C670 and C672 are each lipidated (S-palmitoyl cysteine; by host). At C672–C676 the chain is on the cytoplasmic side.

The protein belongs to the filoviruses glycoprotein family. In terms of assembly, homotrimer; each monomer consists of a GP1 and a GP2 subunit linked by disulfide bonds. The resulting peplomers (GP1,2) protrude from the virus surface as spikes. Interacts with host integrin alpha-V/ITGAV. Interacts with host CLEC10A. Binds also to host CD209 and CLEC4M/DC-SIGN(R). Interacts with host FOLR1. Interacts with BST2; this interaction inhibits the antiviral effect of BST2 and this allows viral release from infected cells. Interacts with host FCN1; this interaction enhances viral entry. Interacts with host TLR4; this interaction induces cell death in T-lymphocytes or proinflammatory cytokines and SOCS1 production in monocytes. As to quaternary structure, interacts with host entry receptor NPC1. GP1 and GP2delta are part of GP1,2delta soluble complexes released by ectodomain shedding. The signal peptide region modulates GP's high mannose glycosylation, thereby determining the efficiency of the interactions with DC-SIGN(R). In terms of processing, N-glycosylated. Post-translationally, O-glycosylated in the mucin-like region. Palmitoylation of GP2 is not required for its function. In terms of processing, specific enzymatic cleavages in vivo yield mature proteins. The precursor is processed into GP1 and GP2 by host cell furin in the trans Golgi, and maybe by other host proteases, to yield the mature GP1 and GP2 proteins. The cleavage site corresponds to the furin optimal cleavage sequence [KR]-X-[KR]-R. This cleavage does not seem to be required for function. After the internalization of the virus into cell endosomes, GP1 C-terminus is removed by the endosomal proteases cathepsin B, cathepsin L, or both, leaving a 19-kDa N-terminal fragment which is further digested by cathepsin B. Proteolytic processing of GP1,2 by host ADAM17 can remove the transmembrane anchor of GP2 and leads to shedding of complexes consisting in GP1 and truncated GP2 (GP1,2delta).

The protein localises to the virion membrane. The protein resides in the host cell membrane. Its subcellular location is the secreted. Functionally, trimeric GP1,2 complexes form the virion surface spikes and mediate the viral entry processes, with GP1 acting as the receptor-binding subunit and GP2 as the membrane fusion subunit. At later times of infection, down-regulates the expression of various host cell surface molecules that are essential for immune surveillance and cell adhesion. Down-modulates several integrins including ITGA1, ITGA2, ITGA3, ITGA4, ITGA5, ITGA6, ITGAV and ITGB1. This decrease in cell adhesion molecules may lead to cell detachment, contributing to the disruption of blood vessel integrity and hemorrhages developed during infection (cytotoxicity). Interacts with host TLR4 and thereby stimulates the differentiation and activation of monocytes leading to bystander death of T-lymphocytes. Down-regulates as well the function of host natural killer cells. Counteracts the antiviral effect of host BST2/tetherin that restricts release of progeny virions from infected cells. However, cooperates with VP40 and host BST2 to activate canonical NF-kappa-B pathway in a manner dependent on neddylation. Functions as a decoy for anti-GP1,2 antibodies thereby contributing to viral immune evasion. Interacts and activates host macrophages and dendritic cells inducing up-regulation of cytokine transcription. This effect is mediated throught activation of host TLR4. Its function is as follows. Responsible for binding to the receptor(s) on target cells. Interacts with CD209/DC-SIGN and CLEC4M/DC-SIGNR which act as cofactors for virus entry into dendritic cells (DCs) and endothelial cells. Binding to the macrophage specific lectin CLEC10A also seems to enhance virus infectivity. Interaction with FOLR1/folate receptor alpha may be a cofactor for virus entry in some cell types, although results are contradictory. Members of the Tyro3 receptor tyrosine kinase family also seem to be cell entry factors in filovirus infection. Once attached, the virions are internalized through clathrin-dependent endocytosis and/or macropinocytosis. After internalization of the virus into the endosomes of the host cell, proteolysis of GP1 by two cysteine proteases, CTSB/cathepsin B and CTSL/cathepsin L removes the glycan cap and allows GP1 binding to the host entry receptor NPC1. NPC1-binding, Ca(2+) and acidic pH induce a conformational change of GP2, which unmasks its fusion peptide and permit membranes fusion. In terms of biological role, acts as a class I viral fusion protein. Under the current model, the protein has at least 3 conformational states: pre-fusion native state, pre-hairpin intermediate state, and post-fusion hairpin state. During viral and target cell membrane fusion, the coiled coil regions (heptad repeats) assume a trimer-of-hairpins structure, positioning the fusion peptide in close proximity to the C-terminal region of the ectodomain. The formation of this structure appears to drive apposition and subsequent fusion of viral and target cell membranes. Responsible for penetration of the virus into the cell cytoplasm by mediating the fusion of the membrane of the endocytosed virus particle with the endosomal membrane. Low pH in endosomes induces an irreversible conformational change in GP2, releasing the fusion hydrophobic peptide. The chain is Envelope glycoprotein (GP) from Sudan ebolavirus (strain Maleo-79) (SEBOV).